The sequence spans 710 residues: Forkhead box protein P2 (710 aa).

A compositionally biased stretch (polar residues) spans 1–28; sequence MMQESATETISNSSMNQNGMSTLSSQLD. 2 disordered regions span residues 1–44 and 272–334; these read MMQE…SSEV and HSQE…TGAS. Basic and acidic residues predominate over residues 273 to 283; the sequence is SQEDNGIKHGG. Residues 287 to 300 show a composition bias toward low complexity; sequence TTNNSSSTTSSTTS. The segment covering 310 to 319 has biased composition (polar residues); the sequence is SIVNGQSSVL. Over residues 321-332 the composition is skewed to basic and acidic residues; the sequence is ARRDSSSHEETG. The C2H2-type zinc-finger motif lies at 343 to 366; the sequence is CKWPGCESICEDFGQFLKHLNNEH. The leucine-zipper stretch occupies residues 383 to 404; that stretch reads VQQLEIQLSKERERLQAMMTHL. The CTBP1-binding stretch occupies residues 417–421; that stretch reads PLNLV. Low complexity predominate over residues 433-454; it reads TSPQSLPQTPTTPTAPVTPITQ. The interval 433–460 is disordered; sequence TSPQSLPQTPTTPTAPVTPITQGPSVIT. Positions 499–589 form a DNA-binding region, fork-head; that stretch reads RPPFTYATLI…SQKITGSPTL (91 aa). Disordered stretches follow at residues 644 to 663 and 673 to 710; these read LDHI…QPHI and VIAE…EDLE. The span at 694–710 shows a compositional bias: acidic residues; the sequence is LEDDREIEEEPLSEDLE.

As to quaternary structure, forms homodimers and heterodimers with FOXP1 and FOXP4. Dimerization is required for DNA-binding. Interacts with CTBP1. Interacts with FOXP1. Interacts with TBR1. Interacts with ZMYM2.

It localises to the nucleus. In terms of biological role, transcriptional repressor that may play a role in the specification and differentiation of lung epithelium. May also play a role in developing neural, gastrointestinal and cardiovascular tissues. Can act with CTBP1 to synergistically repress transcription but CTPBP1 is not essential. Plays a role in synapse formation by regulating SRPX2 levels. This Rattus norvegicus (Rat) protein is Forkhead box protein P2 (Foxp2).